The chain runs to 1881 residues: Kinesin-like protein KIF26A (1881 aa).

Disordered stretches follow at residues Pro20–Gly66, Pro145–Pro193, and Ala309–Pro330. Ser30 carries the phosphoserine modification. In terms of domain architecture, Kinesin motor spans Lys364–Leu718. ATP is bound at residue Gly462–Ser469. 8 disordered regions span residues Leu718–Gln778, Ser794–Asp827, Gly846–Leu982, Tyr1078–Ala1104, Leu1118–Pro1266, Ser1328–Pro1425, Ser1442–Leu1633, and Tyr1652–Gln1698. Basic residues predominate over residues Arg742–His751. Basic and acidic residues predominate over residues Arg818–Asp827. A compositionally biased stretch (polar residues) spans Ser905–Glu915. The span at Leu940–Gln950 shows a compositional bias: pro residues. Low complexity predominate over residues Glu1084–Gly1095. Residues Glu1151–Arg1162 are compositionally biased toward basic and acidic residues. Ser1257 is modified (phosphoserine). Residues Ser1328–Gly1353 show a composition bias toward low complexity. A compositionally biased stretch (polar residues) spans Leu1366–Leu1378. Residues Arg1390–Gly1399 are compositionally biased toward basic and acidic residues. The span at Arg1400–Leu1412 shows a compositional bias: polar residues. 3 stretches are compositionally biased toward low complexity: residues Pro1477–Gly1489, Pro1524–Gly1537, and Trp1575–Gly1587. Over residues Arg1616 to Leu1629 the composition is skewed to polar residues. At Ser1654 the chain carries Phosphoserine. The segment covering Ser1664–Ser1675 has biased composition (low complexity). Residues Arg1685–Gln1698 show a composition bias toward basic residues. The stretch at Leu1780 to Met1812 forms a coiled coil.

This sequence belongs to the TRAFAC class myosin-kinesin ATPase superfamily. Kinesin family. KIF26 subfamily. In terms of assembly, interacts with GRB2 (via SH2 domain). As to expression, expressed in several neuronal populations.

The protein localises to the cytoplasm. It is found in the cytoskeleton. Its function is as follows. Atypical kinesin that plays a key role in enteric neuron development. Acts by repressing a cell growth signaling pathway in the enteric nervous system development, possibly via its interaction with GRB2 that prevents GRB2-binding to SHC, thereby attenating the GDNF-Ret signaling. Binds to microtubules but lacks microtubule-based motility due to the absence of ATPase activity. Plays a critical role in cerebral cortical development. It probably acts as a microtubule stabilizer that regulates neurite growth and radial migration of cortical excitatory neurons. The sequence is that of Kinesin-like protein KIF26A (Kif26a) from Mus musculus (Mouse).